The primary structure comprises 123 residues: Small ribosomal subunit protein uS12 (123 aa).

The segment at Met-1–Gln-25 is disordered. The residue at position 90 (Asp-90) is a 3-methylthioaspartic acid.

The protein belongs to the universal ribosomal protein uS12 family. As to quaternary structure, part of the 30S ribosomal subunit. Contacts proteins S8 and S17. May interact with IF1 in the 30S initiation complex.

Its function is as follows. With S4 and S5 plays an important role in translational accuracy. In terms of biological role, interacts with and stabilizes bases of the 16S rRNA that are involved in tRNA selection in the A site and with the mRNA backbone. Located at the interface of the 30S and 50S subunits, it traverses the body of the 30S subunit contacting proteins on the other side and probably holding the rRNA structure together. The combined cluster of proteins S8, S12 and S17 appears to hold together the shoulder and platform of the 30S subunit. The polypeptide is Small ribosomal subunit protein uS12 (Ehrlichia canis (strain Jake)).